A 104-amino-acid polypeptide reads, in one-letter code: uncharacterized protein (104 aa).

The next 2 helical transmembrane spans lie at 47 to 67 (IDHRTWHIVGLCIFGFLLAML) and 72 to 92 (VGHVEDWFLITFAAVVLFVLA).

It to M.leprae ML1584.

The protein localises to the cell membrane. This is an uncharacterized protein from Mycobacterium tuberculosis (strain CDC 1551 / Oshkosh).